Here is a 379-residue protein sequence, read N- to C-terminus: Class V chitinase CHIT5b (379 aa).

The first 26 residues, 1–26 (MANILNLKHLLTLALILLALATKSST), serve as a signal peptide directing secretion. One can recognise a GH18 domain in the interval 34–379 (RVKGIYWLEN…TQASKAWKLV (346 aa)). Asn68, Asn109, and Asn128 each carry an N-linked (GlcNAc...) asparagine glycan. Catalysis depends on Glu147, which acts as the Proton donor. 3 N-linked (GlcNAc...) asparagine glycosylation sites follow: Asn192, Asn227, and Asn241.

Belongs to the glycosyl hydrolase 18 family. Chitinase class V subfamily.

The enzyme catalyses Random endo-hydrolysis of N-acetyl-beta-D-glucosaminide (1-&gt;4)-beta-linkages in chitin and chitodextrins.. It functions in the pathway glycan degradation; chitin degradation. In terms of biological role, possesses chitinase activity in vitro toward glycol chitin, carboxymethyl-chitin, colloidal chitin, and the chitin oligosaccharides (N-acetylglucosamine) (GlcNAc)6 and (GlcNAc)5. Hydrolyzes (GlcNAc)6 into (GlcNAc)4 and (GlcNAc)2, or two (GlcNAc)3 molecules. Has the capacity to reduce hyphal growth of the fungus Trichoderma viride in an agar-plate bioassay. The protein is Class V chitinase CHIT5b of Medicago truncatula (Barrel medic).